A 122-amino-acid polypeptide reads, in one-letter code: MGNLIKELQEEQLRKEILTDFCVGDTIRVATKIVDGGKERTQTFQGTVMARKGGGAGEVISLHRVAYGEGMEKSFLLHSPKIVGIEVVKRGKVSRARLYYLKGKTGKAAKVKEYIGPRSAKK.

This sequence belongs to the bacterial ribosomal protein bL19 family.

This protein is located at the 30S-50S ribosomal subunit interface and may play a role in the structure and function of the aminoacyl-tRNA binding site. The chain is Large ribosomal subunit protein bL19 from Chlamydia abortus (strain DSM 27085 / S26/3) (Chlamydophila abortus).